The primary structure comprises 270 residues: 4-hydroxy-tetrahydrodipicolinate reductase (270 aa).

NAD(+) is bound by residues 11–16 and Glu-37; that span reads GAGGRM. Arg-38 is a binding site for NADP(+). NAD(+)-binding positions include 101 to 103 and 125 to 128; these read GTT and APNM. His-158 acts as the Proton donor/acceptor in catalysis. (S)-2,3,4,5-tetrahydrodipicolinate is bound at residue His-159. Lys-162 (proton donor) is an active-site residue. 168-169 contacts (S)-2,3,4,5-tetrahydrodipicolinate; sequence GT.

It belongs to the DapB family.

Its subcellular location is the cytoplasm. The enzyme catalyses (S)-2,3,4,5-tetrahydrodipicolinate + NAD(+) + H2O = (2S,4S)-4-hydroxy-2,3,4,5-tetrahydrodipicolinate + NADH + H(+). The catalysed reaction is (S)-2,3,4,5-tetrahydrodipicolinate + NADP(+) + H2O = (2S,4S)-4-hydroxy-2,3,4,5-tetrahydrodipicolinate + NADPH + H(+). It functions in the pathway amino-acid biosynthesis; L-lysine biosynthesis via DAP pathway; (S)-tetrahydrodipicolinate from L-aspartate: step 4/4. In terms of biological role, catalyzes the conversion of 4-hydroxy-tetrahydrodipicolinate (HTPA) to tetrahydrodipicolinate. The sequence is that of 4-hydroxy-tetrahydrodipicolinate reductase from Shewanella oneidensis (strain ATCC 700550 / JCM 31522 / CIP 106686 / LMG 19005 / NCIMB 14063 / MR-1).